The chain runs to 676 residues: tRNA 5-methylaminomethyl-2-thiouridine biosynthesis bifunctional protein MnmC (676 aa).

Residues 1 to 241 (MFTVTPAKIY…KRECLCGIKN (241 aa)) form a tRNA (mnm(5)s(2)U34)-methyltransferase region. The tract at residues 268 to 676 (IGGGIASLFT…RKLLKGTEIK (409 aa)) is FAD-dependent cmnm(5)s(2)U34 oxidoreductase.

The protein in the N-terminal section; belongs to the methyltransferase superfamily. tRNA (mnm(5)s(2)U34)-methyltransferase family. In the C-terminal section; belongs to the DAO family. FAD serves as cofactor.

It localises to the cytoplasm. The enzyme catalyses 5-aminomethyl-2-thiouridine(34) in tRNA + S-adenosyl-L-methionine = 5-methylaminomethyl-2-thiouridine(34) in tRNA + S-adenosyl-L-homocysteine + H(+). Catalyzes the last two steps in the biosynthesis of 5-methylaminomethyl-2-thiouridine (mnm(5)s(2)U) at the wobble position (U34) in tRNA. Catalyzes the FAD-dependent demodification of cmnm(5)s(2)U34 to nm(5)s(2)U34, followed by the transfer of a methyl group from S-adenosyl-L-methionine to nm(5)s(2)U34, to form mnm(5)s(2)U34. In Histophilus somni (strain 2336) (Haemophilus somnus), this protein is tRNA 5-methylaminomethyl-2-thiouridine biosynthesis bifunctional protein MnmC.